We begin with the raw amino-acid sequence, 808 residues long: Homeobox-leucine zipper protein HDG1 (808 aa).

Residues Leu57–Gln121 form a disordered region. The span at Ser79–Ser90 shows a compositional bias: basic and acidic residues. Over residues Leu108 to Pro119 the composition is skewed to basic residues. The segment at residues Lys110–Ile169 is a DNA-binding region (homeobox). A coiled-coil region spans residues Phe158 to Val233. Residues Asp310–Ile541 form the START domain.

It belongs to the HD-ZIP homeobox family. Class IV subfamily. In terms of assembly, interacts with CFL1. Binds with BBM. As to expression, expressed in trichomes forming at the base of young leaves, in endodermal cell lines around emergent lateral roots and in the epidermal layer of the stamen filament.

It is found in the nucleus. Functionally, probable transcription factor. Promotes cuticle development probably by modulating the expression of the downstream genes BDG and FDH, possibly repressed in a CFL1-dependent manner. Involved, together with PDF2, in the regulation of flower organs development by promoting the expression of APETALA 3 (AP3) in the epidermis and internal cell layers of developing flowers. In opposition to BBM, seems to promote cell differentiation and giant cell identity via transcriptional repression of meristem and cell proliferation genes. The protein is Homeobox-leucine zipper protein HDG1 of Arabidopsis thaliana (Mouse-ear cress).